Reading from the N-terminus, the 123-residue chain is UPF0102 protein CLM_2733 (123 aa).

This sequence belongs to the UPF0102 family.

This Clostridium botulinum (strain Kyoto / Type A2) protein is UPF0102 protein CLM_2733.